Consider the following 72-residue polypeptide: Altered inheritance of mitochondria protein 4 (72 aa).

This sequence belongs to the AIM4 family.

It is found in the cytoplasm. The polypeptide is Altered inheritance of mitochondria protein 4 (AIM4) (Zygosaccharomyces rouxii (strain ATCC 2623 / CBS 732 / NBRC 1130 / NCYC 568 / NRRL Y-229)).